The following is a 722-amino-acid chain: MAR-binding filament-like protein 1-1 (722 aa).

Residues 1–20 (MGSSCFPQSPLSHSLFSSSS) are disordered. The transit peptide at 1 to 50 (MGSSCFPQSPLSHSLFSSSSLSSSQFTPLLFSPRNAQKCKKKMPAMACIH) directs the protein to the chloroplast. Residues 51 to 84 (SENQKESEFCSRRTILFVGFSVLPLLSLRANAFE) constitute a thylakoid transit peptide. The Lumenal, thylakoid segment spans residues 85 to 112 (GLSVDSQVKAQPQKEETEQTIQGNAENP). A helical transmembrane segment spans residues 113–133 (FFSLLNGLGVFGSGVLGSLYA). The Stromal segment spans residues 134-722 (LARNEKAVSD…TQPASQQESS (589 aa)). Residues 146 to 679 (IESMKNKLKE…KGEILRLRTQ (534 aa)) are a coiled coil. The interval 687–722 (VNNEEKVEAGEKAAVTVKRTRRRKTATQPASQQESS) is disordered. The Nuclear localization signal signature appears at 705–712 (RTRRRKTA).

Interacts with PTST2; the interaction is essential for the initiation of starch granules biosynthesis in leaf chloroplasts, for the correct location of the process in the stromal spaces between the thylakoid membranes, and for the association of PTST2 with the thylakoid membranes. Predicted to be translocated into the thylakoid by the Tat system.

Its subcellular location is the plastid. The protein localises to the chloroplast. It localises to the chloroplast thylakoid membrane. It is found in the chloroplast stroma. The protein resides in the chloroplast nucleoid. Its subcellular location is the nucleus. The protein localises to the nucleus matrix. In terms of biological role, required for the initiation of starch granules biosynthesis in leaf chloroplasts. Anchored to the thylakoid membranes with its C-terminus facing into the stroma where it is essential for localizing PTST2 and SS4 to the stromal spaces between the thylakoid membranes in order to begin starch granule formation. Associated with leaf chloroplastic nucleoids in vivo. Binds to various chloroplastic double-stranded DNA fragments without particular sequence specificity in vitro. May function at the interface between nucleoids and thylakoids possibly by anchoring nucleoids to the thylakoid membrane system in mature chloroplasts. Likely to participate in nuclear architecture by connecting chromatin with the nuclear matrix and potentially with the nuclear envelope. In Nicotiana tabacum (Common tobacco), this protein is MAR-binding filament-like protein 1-1.